A 797-amino-acid chain; its full sequence is Homoaconitase, mitochondrial (797 aa).

The transit peptide at 1 to 47 directs the protein to the mitochondrion; it reads MVARFVPSAMTVLVARRGLAMASTRRGWRGLAVNLKPAAGRQWRQAY. Residues C404, C471, and C474 each coordinate [4Fe-4S] cluster.

Belongs to the aconitase/IPM isomerase family. The cofactor is [4Fe-4S] cluster.

The protein resides in the mitochondrion. It carries out the reaction (2R,3S)-homoisocitrate = cis-homoaconitate + H2O. It participates in amino-acid biosynthesis; L-lysine biosynthesis via AAA pathway; L-alpha-aminoadipate from 2-oxoglutarate: step 3/5. Functionally, catalyzes the reversible hydration of cis-homoaconitate to (2R,3S)-homoisocitrate, a step in the alpha-aminoadipate pathway for lysine biosynthesis. The sequence is that of Homoaconitase, mitochondrial (LYS4) from Chaetomium globosum (strain ATCC 6205 / CBS 148.51 / DSM 1962 / NBRC 6347 / NRRL 1970) (Soil fungus).